A 276-amino-acid chain; its full sequence is Phosducin-like protein 1 (276 aa).

A phosphoserine mark is found at serine 18, serine 19, serine 20, and serine 42. Residues 18 to 74 (SSSEGEDNGDEGGDNKGASGKSRCSGLTIDTNPDATPAGGFRQQSSTNTGPKGVVKD) form a disordered region. The Phosducin domain occupies 62 to 272 (SSTNTGPKGV…LIEHGIIVDR (211 aa)). The tract at residues 153–276 (FGQVQQLTSH…GIIVDRALYN (124 aa)) is thioredoxin fold.

It belongs to the phosducin family. In terms of assembly, forms a complex with the beta and gamma subunits of the GTP-binding proteins. Interacts with the CCT chaperonin complex.

Functionally, functions as a co-chaperone for CCT in the assembly of heterotrimeric G protein complexes, facilitates the assembly of both Gbeta-Ggamma and RGS-Gbeta5 heterodimers. The polypeptide is Phosducin-like protein 1 (Drosophila melanogaster (Fruit fly)).